A 1811-amino-acid polypeptide reads, in one-letter code: Protein virilizer homolog (1811 aa).

Ala2 carries the post-translational modification N-acetylalanine. Residues 132–302 (ISHDRDSPPP…EGDDGYEQIS (171 aa)) are disordered. Phosphoserine occurs at positions 133 and 138. The segment covering 139 to 152 (PPPPPPPPPPPQPQ) has biased composition (pro residues). Basic and acidic residues predominate over residues 160–169 (KHADGEKEDQ). Ser173 carries the post-translational modification Phosphoserine. Residues 174–190 (PPRPQPRGPRTPPGPPP) are compositionally biased toward pro residues. Residue Thr184 is modified to Phosphothreonine. Ser222 bears the Phosphoserine mark. Polar residues predominate over residues 224 to 233 (DRNSVPQEGQ). Acidic residues-rich tracts occupy residues 234 to 267 (YSDE…DEDD) and 274 to 302 (IPDD…EQIS). Tyr913 bears the Phosphotyrosine mark. Phosphoserine is present on Ser1578. Disordered stretches follow at residues 1615–1634 (HVVP…GIRP) and 1662–1811 (KEVV…SFTR). Residues 1688 to 1697 (GFSGNRGGRG) show a composition bias toward gly residues. Phosphothreonine is present on Thr1707. An Omega-N-methylarginine modification is found at Arg1722. Polar residues predominate over residues 1722-1747 (RGSSWSAQNTPRGNYNESRGGQSNFN). Arg1740 is subject to Asymmetric dimethylarginine; alternate. Position 1740 is an omega-N-methylarginine; alternate (Arg1740). 3 positions are modified to asymmetric dimethylarginine: Arg1772, Arg1774, and Arg1792. Residues 1787–1801 (GSGGSRGKFVSGGSG) show a composition bias toward gly residues. Residues 1802–1811 (RGRHVRSFTR) show a composition bias toward basic residues.

This sequence belongs to the vir family. As to quaternary structure, component of the WMM complex, a N6-methyltransferase complex composed of a catalytic subcomplex, named MAC, and of an associated subcomplex, named MACOM. The MAC subcomplex is composed of METTL3 and METTL14. The MACOM subcomplex is composed of WTAP, ZC3H13, CBLL1/HAKAI, VIRMA, and, in some cases of RBM15 (RBM15 or RBM15B). Interacts with WTAP. Also a component of a MACOM-like complex, named WTAP complex, composed of WTAP, ZC3H13, CBLL1, VIRMA, RBM15, BCLAF1 and THRAP3. Interacts with NUDT21 and CPSF6.

It localises to the nucleus speckle. The protein localises to the nucleus. The protein resides in the nucleoplasm. It is found in the cytoplasm. Functionally, associated component of the WMM complex, a complex that mediates N6-methyladenosine (m6A) methylation of RNAs, a modification that plays a role in the efficiency of mRNA splicing and RNA processing. Acts as a key regulator of m6A methylation by promoting m6A methylation of mRNAs in the 3'-UTR near the stop codon: recruits the catalytic core components METTL3 and METTL14, thereby guiding m6A methylation at specific sites. Required for mRNA polyadenylation via its role in selective m6A methylation: m6A methylation of mRNAs in the 3'-UTR near the stop codon correlating with alternative polyadenylation (APA). This is Protein virilizer homolog from Mus musculus (Mouse).